The primary structure comprises 463 residues: MVKTRFAPSPTGYLHIGGARTALFSWAFARKQGGKFILRIEDTDLERSTQQSVQAILDGMAWLGLDYDEGPYYQMQRLSRYQEVAELLLKQGLAYRCYASKEELDALREQQRLAGLKPRYDGRWRDSKQTPPAGVTPVVRFKTPREGYAVFDDLVKGRIAVANHELDDLVLMRSDGTPTYNFGVVLDDLDMGVTHVIRGDDHVNNTPRQINILKALGAIIPQYAHVPMILGADGERLSKRHGAVSVMHYRDQGYLPEALINYLARLGWSHGDEEIFSQEQLVEWFDLAAINRSPAKFNPEKLTWLNQHYLKIAEDARLMELVTPILLGRKYSLPGEENMFKIINLLKERVSTIEELADASAYFFQAVEPAEALRTQYFTVEIRPVLEYLIDRLAQIEWKREAIHQEIKQTVSSHKLKFPNLAMPLRVMVTGEAQTPAIDAVLELIGKEETLHRLRDQLDAFPQ.

A 'HIGH' region motif is present at residues 8–18; that stretch reads PSPTGYLHIGG. The 'KMSKS' region signature appears at 236 to 240; that stretch reads RLSKR. K239 is an ATP binding site.

The protein belongs to the class-I aminoacyl-tRNA synthetase family. Glutamate--tRNA ligase type 1 subfamily. Monomer.

The protein resides in the cytoplasm. It catalyses the reaction tRNA(Glu) + L-glutamate + ATP = L-glutamyl-tRNA(Glu) + AMP + diphosphate. In terms of biological role, catalyzes the attachment of glutamate to tRNA(Glu) in a two-step reaction: glutamate is first activated by ATP to form Glu-AMP and then transferred to the acceptor end of tRNA(Glu). The sequence is that of Glutamate--tRNA ligase from Nitrosomonas eutropha (strain DSM 101675 / C91 / Nm57).